A 764-amino-acid polypeptide reads, in one-letter code: Protective antigen (764 aa).

Positions 1–29 (MKKRKVLIPLMALSTILVSSTGNLEVIQA) are cleaved as a signal peptide. Residues 30 to 287 (EVKQENRLLN…PEARHPLVAA (258 aa)) are domain 1, calcium-binding; LF and EF binding sites. The PA14 domain maps to 43–179 (SSSQGLLGYY…NKKEVISSDN (137 aa)). The disordered stretch occupies residues 176–214 (SSDNLQLPELKQKSSNSRKKRSTSAGPTVPDRDNDGIPD). Ca(2+) contacts are provided by aspartate 206, aspartate 208, aspartate 210, isoleucine 212, and glutamate 217. The interval 231–239 (FLSPWISNI) is alpha-clamp. The Ca(2+) site is built by serine 251, lysine 254, and aspartate 264. The tract at residues 288-516 (YPIVHVDMEN…SEVLPQIQET (229 aa)) is domain 2, membrane insertion and heptamerization. The disordered stretch occupies residues 302-333 (KNEDQSTQNTDSQTRTISKNTSTSRTHTSEVH). Over residues 306-327 (QSTQNTDSQTRTISKNTSTSRT) the composition is skewed to polar residues. Beta stranded transmembrane passes span 331–342 (EVHGNAEVHASF) and 345–354 (IGGSVSAGFS). A domain 3, heptamerization region spans residues 517–624 (TARIIFNGKD…KMNILIRDKR (108 aa)). Residues 625–764 (FHYDRNNIAV…IFSKKGYEIG (140 aa)) form a domain 4, binding to the receptor region.

Belongs to the bacterial binary toxin family. In terms of assembly, interacts with host ANTXR1 and ANTXR2. Homooligomer; homooligomerizes to form homoheptamers (PA-63(7)) or homooctamers (PA-63(8)). PA-63(7) or PA-63(8) form ring-shaped oligomers that are in a pre-pore conformation, which do not penetrate the host membrane. PA-63(8) displays an enhanced stability, suggesting that this form circulates in the blood to reach and exert toxicity even in distant tissues. Interacts with lethal factor (LF) and edema factor (EF); can bind LF and EF simultaneously and interaction takes place following homooligomerization on the host cell membrane. PA-63(7) homoheptamer interacts with three molecules of LF to form the PA(7)LF(3) complex, in which the relative position of the N-terminal alpha-helices in the three LFs determines which factor is translocated first. Proteolytic activation by FURIN cleaves the protein in two parts, PA-20 and PA-63; the latter is the mature protein. The cleavage occurs at the cell surface and probably in the serum of infected animals as well; both native and cleaved PA are able to bind to the cell receptor. The release of PA-20 from the remaining receptor-bound PA-63 exposes the binding site for EF and LF, and promotes oligomerization and internalization of the protein.

It is found in the secreted. Its subcellular location is the host cell membrane. The protein resides in the host endosome membrane. In terms of biological role, protective antigen constitutes one of the three proteins composing the anthrax toxin; it mediates attachment to host cells and translocation of edema factor (EF) and lethal factor (LF) into the host cytoplasm. PA associated with LF forms the lethal toxin (LeTx) and causes death when injected; PA associated with EF forms the edema toxin (EdTx) and produces edema. PA induces immunity to infection with anthrax. Functionally, mediates the attachment to host cells by binding host cell receptors ANTXR1 and ANTXR2. Following host cell surface attachment, PA is cleaved by FURIN to generate the PA-63 (Protective antigen PA-63) form, which constitutes the mature form of the protein that oligomerizes and forms a pore to translocate the enzymatic toxin components edema factor (EF) and lethal factor (LF) into the host cytosol. Mature form that oligomerizes and forms a pore to translocate the enzymatic toxin components edema factor (EF) and lethal factor (LF) into the host cytosol. Following attachment to host cell receptors and cleavage by FURIN, homooligomerizes to form ring-shaped oligomers that are in a pre-pore conformation, and associates with EF and LF. Toxin-leaded complexes are then endocytosed in a clathrin-dependent process, followed by a conformational change of oligomerized PA-63 from the pre-pore to pore state, which is triggered by the low pH in the endosome. Once active, the pore mediates unfolding of EF and LF, which pass through the pore and translocate into the host cytosol. The protein is Protective antigen (pagA) of Bacillus anthracis.